The sequence spans 186 residues: Ribosome-recycling factor (186 aa).

The protein belongs to the RRF family.

It localises to the cytoplasm. Responsible for the release of ribosomes from messenger RNA at the termination of protein biosynthesis. May increase the efficiency of translation by recycling ribosomes from one round of translation to another. In Chlorobaculum tepidum (strain ATCC 49652 / DSM 12025 / NBRC 103806 / TLS) (Chlorobium tepidum), this protein is Ribosome-recycling factor.